A 355-amino-acid polypeptide reads, in one-letter code: UDP-N-acetylglucosamine--N-acetylmuramyl-(pentapeptide) pyrophosphoryl-undecaprenol N-acetylglucosamine transferase (355 aa).

Residues 12 to 14, N124, R160, S192, I243, 262 to 267, and Q287 each bind UDP-N-acetyl-alpha-D-glucosamine; these read TGG and ALTVCE.

It belongs to the glycosyltransferase 28 family. MurG subfamily.

The protein localises to the cell inner membrane. It carries out the reaction di-trans,octa-cis-undecaprenyl diphospho-N-acetyl-alpha-D-muramoyl-L-alanyl-D-glutamyl-meso-2,6-diaminopimeloyl-D-alanyl-D-alanine + UDP-N-acetyl-alpha-D-glucosamine = di-trans,octa-cis-undecaprenyl diphospho-[N-acetyl-alpha-D-glucosaminyl-(1-&gt;4)]-N-acetyl-alpha-D-muramoyl-L-alanyl-D-glutamyl-meso-2,6-diaminopimeloyl-D-alanyl-D-alanine + UDP + H(+). It participates in cell wall biogenesis; peptidoglycan biosynthesis. Cell wall formation. Catalyzes the transfer of a GlcNAc subunit on undecaprenyl-pyrophosphoryl-MurNAc-pentapeptide (lipid intermediate I) to form undecaprenyl-pyrophosphoryl-MurNAc-(pentapeptide)GlcNAc (lipid intermediate II). The polypeptide is UDP-N-acetylglucosamine--N-acetylmuramyl-(pentapeptide) pyrophosphoryl-undecaprenol N-acetylglucosamine transferase (Haemophilus ducreyi (strain 35000HP / ATCC 700724)).